Reading from the N-terminus, the 235-residue chain is Glucosamine-6-phosphate deaminase (235 aa).

The active-site Proton acceptor; for enolization step is aspartate 62. Asparagine 128 (for ring-opening step) is an active-site residue. Histidine 130 acts as the Proton acceptor; for ring-opening step in catalysis. The For ring-opening step role is filled by glutamate 135.

Belongs to the glucosamine/galactosamine-6-phosphate isomerase family. NagB subfamily.

The enzyme catalyses alpha-D-glucosamine 6-phosphate + H2O = beta-D-fructose 6-phosphate + NH4(+). The protein operates within amino-sugar metabolism; N-acetylneuraminate degradation; D-fructose 6-phosphate from N-acetylneuraminate: step 5/5. Catalyzes the reversible isomerization-deamination of glucosamine 6-phosphate (GlcN6P) to form fructose 6-phosphate (Fru6P) and ammonium ion. The protein is Glucosamine-6-phosphate deaminase of Lactococcus lactis subsp. lactis (strain IL1403) (Streptococcus lactis).